Reading from the N-terminus, the 197-residue chain is DnaJ homolog subfamily C member 5 (197 aa).

The 70-residue stretch at 13-82 (GESLYHVLGL…RNIYDKYGSL (70 aa)) folds into the J domain. The disordered stretch occupies residues 153–197 (EDLEAQMQSDERDTEGPVLVQPASATETTQLTSDSHASYHTDGFN). Residues 175–197 (ASATETTQLTSDSHASYHTDGFN) show a composition bias toward polar residues.

Post-translationally, palmitoylated. Palmitoylation occurs probably in the cysteine-rich domain and regulates DNAJC5 stable membrane attachment.

It is found in the cytoplasm. It localises to the cytosol. Its subcellular location is the membrane. The protein localises to the cytoplasmic vesicle. The protein resides in the secretory vesicle. It is found in the chromaffin granule membrane. It localises to the melanosome. Its subcellular location is the cell membrane. In terms of biological role, may have an important role in presynaptic function. May be involved in calcium-dependent neurotransmitter release at nerve endings. The protein is DnaJ homolog subfamily C member 5 of Xenopus laevis (African clawed frog).